The chain runs to 3187 residues: Cilia- and flagella-associated protein 47 (3187 aa).

Residues 1746–1869 (SDSERILLSW…LCVYMYERLP (124 aa)) enclose the Calponin-homology (CH) domain. Residues 2024–2052 (KLTESRQYPKHDDDMSSSGSDTDQGCSDS) are disordered. The segment covering 2026-2037 (TESRQYPKHDDD) has biased composition (basic and acidic residues).

In terms of assembly, interacts with CFAP65. As to expression, highly expressed in spermatzoa (at protein level).

The protein localises to the cytoplasm. It localises to the cytoskeleton. It is found in the flagellum basal body. Plays a role in flagellar formation and sperm motility. This Homo sapiens (Human) protein is Cilia- and flagella-associated protein 47.